Consider the following 185-residue polypeptide: MLLVIGLGNPGKEYQYTRHNVGFIAIEKIANQYNSSFSTKKKFNCEIAETISYGQKIIFIKPTTYMNLSGKSVISVKTYYNIYPAKSFVIHDDIDLETGRVKFKTGGGNGGHNGLKSIDGVIGNNYNRIRIGVGRPQNNQDLADYVLNHFSKPEYKTVMQAIDRITSNFGLILENKLEEFKNKMA.

Position 14 (Tyr14) interacts with tRNA. His19 acts as the Proton acceptor in catalysis. The tRNA site is built by Tyr65, Asn67, and Asn113.

Belongs to the PTH family. Monomer.

It localises to the cytoplasm. The enzyme catalyses an N-acyl-L-alpha-aminoacyl-tRNA + H2O = an N-acyl-L-amino acid + a tRNA + H(+). Functionally, hydrolyzes ribosome-free peptidyl-tRNAs (with 1 or more amino acids incorporated), which drop off the ribosome during protein synthesis, or as a result of ribosome stalling. Catalyzes the release of premature peptidyl moieties from peptidyl-tRNA molecules trapped in stalled 50S ribosomal subunits, and thus maintains levels of free tRNAs and 50S ribosomes. The sequence is that of Peptidyl-tRNA hydrolase from Rickettsia rickettsii (strain Iowa).